A 119-amino-acid polypeptide reads, in one-letter code: Protein TusC (119 aa).

This sequence belongs to the DsrF/TusC family. In terms of assembly, heterohexamer, formed by a dimer of trimers. The hexameric TusBCD complex contains 2 copies each of TusB, TusC and TusD. The TusBCD complex interacts with TusE.

Its subcellular location is the cytoplasm. Functionally, part of a sulfur-relay system required for 2-thiolation of 5-methylaminomethyl-2-thiouridine (mnm(5)s(2)U) at tRNA wobble positions. The polypeptide is Protein TusC (Buchnera aphidicola subsp. Acyrthosiphon pisum (strain 5A)).